Reading from the N-terminus, the 313-residue chain is Interferon-inducible double-stranded RNA-dependent protein kinase activator A (313 aa).

Basic and acidic residues predominate over residues 1–18; the sequence is MSQSRHRAEAPPLEREDS. The disordered stretch occupies residues 1–21; sequence MSQSRHRAEAPPLEREDSGTF. 3 sufficient for self-association and interaction with TARBP2 regions span residues 1–103, 102–195, and 195–313; these read MSQS…KANA, NASI…FSNI, and ISPE…AERK. At Ser-18 the chain carries Phosphoserine. 3 consecutive DRBM domains span residues 34-101, 126-194, and 240-308; these read TPIQ…ILKA, NPIG…KFSN, and DYIQ…YLKI. Phosphoserine occurs at positions 167, 246, and 287.

This sequence belongs to the PRKRA family. Homodimer. Interacts with EIF2AK2/PKR through its DRBM domains. Interacts with DICER1, AGO2 and TARBP2. Also able to interact with dsRNA. Interacts with UBC9. Forms a complex with UBC9 and p53/TP53. Interacts with DUS2L (via DRBM domain). Interacts with RIGI. As to quaternary structure, (Microbial infection) Interacts with ebolavirus protein VP35; this interaction inhibits the interaction between RIGI and PRKRA. In addition, this interaction disrupts the interaction between VP35 and the viral polymerase L. So the VP35-PRKRA interaction plays a critical role in determining the outcome of ebolavirus infection. The interaction PRKRA-VP35 also prevents PRKRA binding to DICER1 and thus allows the virus to counteract host RNA silencing. In terms of assembly, (Microbial infection) Interacts with human herpesvirus 8 protein MTA/ORF57; this interaction inhibits stress granule formation. Post-translationally, phosphorylated at Ser-246 in unstressed cells and at Ser-287 in stressed cells. Phosphorylation at Ser-246 appears to be a prerequisite for subsequent phosphorylation at Ser-287. Phosphorylation at Ser-246 and Ser-287 are necessary for activation of EIF2AK2/PKR under conditions of stress.

It localises to the cytoplasm. The protein localises to the perinuclear region. In terms of biological role, activates EIF2AK2/PKR in the absence of double-stranded RNA (dsRNA), leading to phosphorylation of EIF2S1/EFI2-alpha and inhibition of translation and induction of apoptosis. Required for siRNA production by DICER1 and for subsequent siRNA-mediated post-transcriptional gene silencing. Does not seem to be required for processing of pre-miRNA to miRNA by DICER1. Promotes UBC9-p53/TP53 association and sumoylation and phosphorylation of p53/TP53 at 'Lys-386' at 'Ser-392' respectively and enhances its activity in a EIF2AK2/PKR-dependent manner. In Homo sapiens (Human), this protein is Interferon-inducible double-stranded RNA-dependent protein kinase activator A (PRKRA).